Consider the following 340-residue polypeptide: Nuclear hormone receptor family member nhr-197 (340 aa).

The nuclear receptor DNA-binding region spans Met-1–Asp-75. 2 consecutive NR C4-type zinc fingers follow at residues Cys-3–Cys-23 and Cys-39–Cys-58. The NR LBD domain occupies Lys-98–Asn-337.

This sequence belongs to the nuclear hormone receptor family.

The protein localises to the nucleus. In terms of biological role, orphan nuclear receptor. The protein is Nuclear hormone receptor family member nhr-197 (nhr-197) of Caenorhabditis elegans.